Reading from the N-terminus, the 450-residue chain is Flavin-containing monooxygenase FMO GS-OX-like 3 (450 aa).

17–22 (GAGPAG) provides a ligand contact to FAD. 215–220 (GNSSSA) lines the NADP(+) pocket.

The protein belongs to the FMO family. The cofactor is FAD.

In terms of biological role, catalyzes the conversion of methylthioalkyl glucosinolates of any chain length into methylsulfinylalkyl glucosinolates. The protein is Flavin-containing monooxygenase FMO GS-OX-like 3 of Arabidopsis thaliana (Mouse-ear cress).